Consider the following 163-residue polypeptide: Transcriptional repressor NrdR (163 aa).

A zinc finger spans residues 3-34 (CPFCRHPDSRVVDSRVSDDGSSIRRRRQCPQC). The ATP-cone domain maps to 46-136 (LTVIKRSGIG…VYQAFESLDD (91 aa)).

This sequence belongs to the NrdR family. Zn(2+) is required as a cofactor.

Functionally, negatively regulates transcription of bacterial ribonucleotide reductase nrd genes and operons by binding to NrdR-boxes. This chain is Transcriptional repressor NrdR, found in Renibacterium salmoninarum (strain ATCC 33209 / DSM 20767 / JCM 11484 / NBRC 15589 / NCIMB 2235).